We begin with the raw amino-acid sequence, 416 residues long: Glutamyl-tRNA reductase (416 aa).

Residues 46–49, Ser97, 102–104, and Gln108 contribute to the substrate site; these read TCNR and DHE. Catalysis depends on Cys47, which acts as the Nucleophile. Position 178 to 183 (178 to 183) interacts with NADP(+); that stretch reads GAGMAA.

It belongs to the glutamyl-tRNA reductase family. In terms of assembly, homodimer.

It catalyses the reaction (S)-4-amino-5-oxopentanoate + tRNA(Glu) + NADP(+) = L-glutamyl-tRNA(Glu) + NADPH + H(+). It functions in the pathway porphyrin-containing compound metabolism; protoporphyrin-IX biosynthesis; 5-aminolevulinate from L-glutamyl-tRNA(Glu): step 1/2. Its function is as follows. Catalyzes the NADPH-dependent reduction of glutamyl-tRNA(Glu) to glutamate 1-semialdehyde (GSA). This chain is Glutamyl-tRNA reductase, found in Aeropyrum pernix (strain ATCC 700893 / DSM 11879 / JCM 9820 / NBRC 100138 / K1).